The primary structure comprises 180 residues: Large ribosomal subunit protein uL6 (180 aa).

Belongs to the universal ribosomal protein uL6 family. In terms of assembly, part of the 50S ribosomal subunit.

Functionally, this protein binds to the 23S rRNA, and is important in its secondary structure. It is located near the subunit interface in the base of the L7/L12 stalk, and near the tRNA binding site of the peptidyltransferase center. The polypeptide is Large ribosomal subunit protein uL6 (Thermus thermophilus (strain ATCC BAA-163 / DSM 7039 / HB27)).